The primary structure comprises 445 residues: Histidinol dehydrogenase (445 aa).

Y130, Q192, and N215 together coordinate NAD(+). The substrate site is built by S238, Q260, and H263. 2 residues coordinate Zn(2+): Q260 and H263. Residues E328 and H329 each act as proton acceptor in the active site. The substrate site is built by H329, D362, E416, and H421. Residue D362 participates in Zn(2+) binding. H421 provides a ligand contact to Zn(2+).

This sequence belongs to the histidinol dehydrogenase family. Requires Zn(2+) as cofactor.

It carries out the reaction L-histidinol + 2 NAD(+) + H2O = L-histidine + 2 NADH + 3 H(+). The protein operates within amino-acid biosynthesis; L-histidine biosynthesis; L-histidine from 5-phospho-alpha-D-ribose 1-diphosphate: step 9/9. Its function is as follows. Catalyzes the sequential NAD-dependent oxidations of L-histidinol to L-histidinaldehyde and then to L-histidine. The polypeptide is Histidinol dehydrogenase (Gloeobacter violaceus (strain ATCC 29082 / PCC 7421)).